A 379-amino-acid polypeptide reads, in one-letter code: uncharacterized protein (379 aa).

3 disordered regions span residues 1–25 (MASD…EKGK), 128–158 (QGKT…IERT), and 355–379 (TEKT…QGDI). Over residues 128-141 (QGKTTSATTSNSTI) the composition is skewed to polar residues.

This is an uncharacterized protein from Caenorhabditis elegans.